Consider the following 57-residue polypeptide: Large ribosomal subunit protein bL32 (57 aa).

The disordered stretch occupies residues 1–20 (MAVQQRRVSKSRKGMRRSHD). Residues 7–19 (RVSKSRKGMRRSH) are compositionally biased toward basic residues.

This sequence belongs to the bacterial ribosomal protein bL32 family.

This Ureaplasma urealyticum serovar 10 (strain ATCC 33699 / Western) protein is Large ribosomal subunit protein bL32.